The sequence spans 873 residues: DNA mismatch repair protein MutS (873 aa).

628-635 (GPNMAGKS) contributes to the ATP binding site.

Belongs to the DNA mismatch repair MutS family.

Its function is as follows. This protein is involved in the repair of mismatches in DNA. It is possible that it carries out the mismatch recognition step. This protein has a weak ATPase activity. The protein is DNA mismatch repair protein MutS of Chlorobium chlorochromatii (strain CaD3).